Consider the following 162-residue polypeptide: MSFWPQSRKARRRLTILLAIAPVLALAVGLALYGLRDSISLFYTPAQAQEAKVSAGRKVQLGGLVQHGSVVKYPDGNVEFVIADQKATAKVVYHGDLPDLFREGQGIVAEGSFNPAGVFEAKLVLAKHDERYMPREVSKALKEQGEWRGEGADAPAYGSQKP.

Over 1–13 the chain is Cytoplasmic; that stretch reads MSFWPQSRKARRR. A helical; Signal-anchor for type II membrane protein transmembrane segment spans residues 14-34; the sequence is LTILLAIAPVLALAVGLALYG. Residues 35-162 lie on the Periplasmic side of the membrane; the sequence is LRDSISLFYT…DAPAYGSQKP (128 aa). 2 residues coordinate heme: His128 and Tyr132. Over residues 140-151 the composition is skewed to basic and acidic residues; it reads ALKEQGEWRGEG. Positions 140–162 are disordered; sequence ALKEQGEWRGEGADAPAYGSQKP.

This sequence belongs to the CcmE/CycJ family.

Its subcellular location is the cell inner membrane. In terms of biological role, heme chaperone required for the biogenesis of c-type cytochromes. Transiently binds heme delivered by CcmC and transfers the heme to apo-cytochromes in a process facilitated by CcmF and CcmH. The protein is Cytochrome c-type biogenesis protein CcmE of Caulobacter vibrioides (strain ATCC 19089 / CIP 103742 / CB 15) (Caulobacter crescentus).